We begin with the raw amino-acid sequence, 1005 residues long: uncharacterized protein (1005 aa).

The N-terminal stretch at 1–24 (MKFQRKYWGLLSTLGVSSAVALSA) is a signal peptide. Cysteine 25 carries the N-palmitoyl cysteine lipid modification. Residue cysteine 25 is the site of S-diacylglycerol cysteine attachment. 2 disordered regions span residues 105 to 165 (KKDK…EEKF) and 786 to 825 (TQKIDQQNTASTTSDVTVKKADSSQDSSKSNTEEEKWDDV). 2 stretches are compositionally biased toward low complexity: residues 110–131 (TSSQKTSTNSSCTTTSSGTSTS) and 145–156 (QSSSNGQNNQQS). Residues 786–801 (TQKIDQQNTASTTSDV) are compositionally biased toward polar residues.

Its subcellular location is the cell membrane. This is an uncharacterized protein from Mycoplasma pneumoniae (strain ATCC 29342 / M129 / Subtype 1) (Mycoplasmoides pneumoniae).